Here is a 118-residue protein sequence, read N- to C-terminus: Large ribosomal subunit protein uL24 (118 aa).

The protein belongs to the universal ribosomal protein uL24 family. Part of the 50S ribosomal subunit.

One of two assembly initiator proteins, it binds directly to the 5'-end of the 23S rRNA, where it nucleates assembly of the 50S subunit. Its function is as follows. One of the proteins that surrounds the polypeptide exit tunnel on the outside of the subunit. The protein is Large ribosomal subunit protein uL24 of Prochlorococcus marinus (strain NATL1A).